The primary structure comprises 218 residues: Octanoyltransferase (218 aa).

The region spanning 32–218 (GEAAEAIWLL…LRTFPQHFPD (187 aa)) is the BPL/LPL catalytic domain. Substrate contacts are provided by residues 71–78 (RGGQYTYH), 151–153 (AIG), and 164–166 (GLS). Cys-182 acts as the Acyl-thioester intermediate in catalysis.

Belongs to the LipB family.

Its subcellular location is the cytoplasm. The catalysed reaction is octanoyl-[ACP] + L-lysyl-[protein] = N(6)-octanoyl-L-lysyl-[protein] + holo-[ACP] + H(+). It participates in protein modification; protein lipoylation via endogenous pathway; protein N(6)-(lipoyl)lysine from octanoyl-[acyl-carrier-protein]: step 1/2. Functionally, catalyzes the transfer of endogenously produced octanoic acid from octanoyl-acyl-carrier-protein onto the lipoyl domains of lipoate-dependent enzymes. Lipoyl-ACP can also act as a substrate although octanoyl-ACP is likely to be the physiological substrate. The chain is Octanoyltransferase from Cereibacter sphaeroides (strain ATCC 17029 / ATH 2.4.9) (Rhodobacter sphaeroides).